The sequence spans 156 residues: Small ribosomal subunit protein uS7 (156 aa).

The protein belongs to the universal ribosomal protein uS7 family. Part of the 30S ribosomal subunit. Contacts proteins S9 and S11.

In terms of biological role, one of the primary rRNA binding proteins, it binds directly to 16S rRNA where it nucleates assembly of the head domain of the 30S subunit. Is located at the subunit interface close to the decoding center, probably blocks exit of the E-site tRNA. This Clavibacter sepedonicus (Clavibacter michiganensis subsp. sepedonicus) protein is Small ribosomal subunit protein uS7.